The following is a 468-amino-acid chain: 6-phosphogluconate dehydrogenase, decarboxylating (468 aa).

Residues 10–15, 33–35, 74–76, and Asn-102 contribute to the NADP(+) site; these read GMAVMG, NRS, and VKA. Residues Asn-102 and 128-130 contribute to the substrate site; that span reads SGG. The active-site Proton acceptor is Lys-183. 186 to 187 serves as a coordination point for substrate; that stretch reads HN. Glu-190 serves as the catalytic Proton donor. Residues Tyr-191, Lys-260, Arg-287, Arg-445, and His-451 each contribute to the substrate site.

It belongs to the 6-phosphogluconate dehydrogenase family. In terms of assembly, homodimer.

The catalysed reaction is 6-phospho-D-gluconate + NADP(+) = D-ribulose 5-phosphate + CO2 + NADPH. It functions in the pathway carbohydrate degradation; pentose phosphate pathway; D-ribulose 5-phosphate from D-glucose 6-phosphate (oxidative stage): step 3/3. Functionally, catalyzes the oxidative decarboxylation of 6-phosphogluconate to ribulose 5-phosphate and CO(2), with concomitant reduction of NADP to NADPH. This Shigella flexneri protein is 6-phosphogluconate dehydrogenase, decarboxylating (gnd).